The chain runs to 602 residues: Elongation factor 4 (602 aa).

Residues 7–189 enclose the tr-type G domain; that stretch reads KRVRNFSIIA…AVVEKVPYPK (183 aa). GTP-binding positions include 19–24 and 136–139; these read DHGKST and NKID.

This sequence belongs to the TRAFAC class translation factor GTPase superfamily. Classic translation factor GTPase family. LepA subfamily.

The protein resides in the cell membrane. It catalyses the reaction GTP + H2O = GDP + phosphate + H(+). In terms of biological role, required for accurate and efficient protein synthesis under certain stress conditions. May act as a fidelity factor of the translation reaction, by catalyzing a one-codon backward translocation of tRNAs on improperly translocated ribosomes. Back-translocation proceeds from a post-translocation (POST) complex to a pre-translocation (PRE) complex, thus giving elongation factor G a second chance to translocate the tRNAs correctly. Binds to ribosomes in a GTP-dependent manner. The sequence is that of Elongation factor 4 from Clostridium tetani (strain Massachusetts / E88).